The chain runs to 153 residues: Heavy metal-associated isoprenylated plant protein 25 (153 aa).

In terms of domain architecture, HMA spans 24-88; sequence LQTVDVRVLI…IIHRTGKRAE (65 aa). Residues C35 and C38 each contribute to the a metal cation site. Position 150 is a cysteine methyl ester (C150). The S-farnesyl cysteine moiety is linked to residue C150. A propeptide spans 151–153 (removed in mature form); sequence VVM.

Belongs to the HIPP family. Expressed in roots, shoot apical meristem, trichomes and flower buds.

It localises to the membrane. In terms of biological role, heavy-metal-binding protein. Binds cadmium. May be involved in cadmium transport and play a role in cadmium detoxification. This chain is Heavy metal-associated isoprenylated plant protein 25, found in Arabidopsis thaliana (Mouse-ear cress).